A 337-amino-acid chain; its full sequence is GTPase Obg (337 aa).

In terms of domain architecture, Obg spans Met-1–Leu-158. Basic and acidic residues-rich tracts occupy residues Asn-61 to Gly-74 and Pro-137 to Gly-146. Disordered stretches follow at residues Asn-61–Arg-83 and Gly-119–Gly-146. The OBG-type G domain maps to Ala-159–Leu-330. GTP-binding positions include Gly-165–Ser-172, Phe-190–Glu-194, Asp-212–Gly-215, Thr-282–Asp-285, and Ser-311–Ala-313. Ser-172 and Thr-192 together coordinate Mg(2+).

This sequence belongs to the TRAFAC class OBG-HflX-like GTPase superfamily. OBG GTPase family. Monomer. The cofactor is Mg(2+).

Its subcellular location is the cytoplasm. Functionally, an essential GTPase which binds GTP, GDP and possibly (p)ppGpp with moderate affinity, with high nucleotide exchange rates and a fairly low GTP hydrolysis rate. Plays a role in control of the cell cycle, stress response, ribosome biogenesis and in those bacteria that undergo differentiation, in morphogenesis control. This chain is GTPase Obg, found in Solibacter usitatus (strain Ellin6076).